The primary structure comprises 1238 residues: uncharacterized protein (1238 aa).

Disordered regions lie at residues 22 to 83, 96 to 150, 169 to 250, 264 to 694, 739 to 915, 936 to 955, and 1057 to 1089; these read LQSA…QEHL, SSRQ…IASP, FEPD…HQML, QLNS…AAMV, TKAA…SVPE, THSA…APHE, and PKIS…QCSS. A compositionally biased stretch (low complexity) spans 35–49; that stretch reads QPPNQQPHQTQQQQQ. Positions 58 to 72 are enriched in polar residues; sequence PSIQNLTTNATPTST. Residues 73–83 are compositionally biased toward low complexity; that stretch reads QLQQQQQQEHL. A compositionally biased stretch (polar residues) spans 96–110; sequence SSRQNQGAPSGNLSN. The segment covering 125-145 has biased composition (low complexity); the sequence is SVSGNTNHTGSNSSSNSGSNN. The segment covering 188–204 has biased composition (polar residues); sequence SASSASKLPTHNVQQQH. Low complexity-rich tracts occupy residues 272–287, 309–334, and 393–406; these read SYQH…QSHP, PLLT…SSQH, and SNEE…NSSN. Over residues 433–450 the composition is skewed to polar residues; the sequence is SKPQHPQQAANLNNSCSP. Position 453 is a phosphoserine (S453). Polar residues predominate over residues 463–472; it reads PFSTQKQSQT. Basic and acidic residues predominate over residues 523–536; it reads TEQHRMQQDDEPPK. Composition is skewed to low complexity over residues 549–570 and 632–641; these read QSNS…SQSS and TTAAVAAPPA. T642 carries the post-translational modification Phosphothreonine. Basic and acidic residues predominate over residues 678–688; it reads ERISSPEKPAE. Phosphoserine is present on residues S682, S749, and S753. Polar residues predominate over residues 755 to 764; it reads IPQSRSTSTP. S793 and S799 each carry phosphoserine. The segment covering 832-860 has biased composition (low complexity); it reads STSAAAAAALAARQLSEAASATKSKPAAG. A compositionally biased stretch (basic residues) spans 861 to 874; that stretch reads AKKKNAGVKGKKGS. Positions 937 to 947 are enriched in basic and acidic residues; it reads HSAEDVNEKQT. Polar residues predominate over residues 1071-1089; that stretch reads DSSISYSDDPNESRSQCSS. The segment at 1089-1131 adopts a C2HC pre-PHD-type; degenerate zinc-finger fold; the sequence is SVDLLDCSTESKFVETFRGMGKTSENGFEVWLHEDCAVWSNDI. S1099 is modified (phosphoserine). The segment at 1151–1199 adopts a PHD-type zinc-finger fold; it reads YQCVLCQQTGASICCFQRCCKAAAHVPCGRSANWSLSEEDRKVYCHLHR.

This is an uncharacterized protein from Drosophila melanogaster (Fruit fly).